A 145-amino-acid polypeptide reads, in one-letter code: 3-hydroxyacyl-[acyl-carrier-protein] dehydratase FabZ (145 aa).

The active site involves histidine 49.

The protein belongs to the thioester dehydratase family. FabZ subfamily.

It is found in the cytoplasm. The enzyme catalyses a (3R)-hydroxyacyl-[ACP] = a (2E)-enoyl-[ACP] + H2O. Its function is as follows. Involved in unsaturated fatty acids biosynthesis. Catalyzes the dehydration of short chain beta-hydroxyacyl-ACPs and long chain saturated and unsaturated beta-hydroxyacyl-ACPs. The protein is 3-hydroxyacyl-[acyl-carrier-protein] dehydratase FabZ of Rickettsia akari (strain Hartford).